A 344-amino-acid polypeptide reads, in one-letter code: Protein POLAR LOCALIZATION DURING ASYMMETRIC DIVISION AND REDISTRIBUTION (344 aa).

Threonine 19 carries the post-translational modification Phosphothreonine; by ASK7. A Phosphoserine; by ASK7 modification is found at serine 79. Residues threonine 84 and threonine 86 each carry the phosphothreonine; by ASK7 modification. Serine 91 and serine 94 each carry phosphoserine; by ASK7. 3 positions are modified to phosphothreonine; by ASK7: threonine 193, threonine 217, and threonine 233. Phosphoserine; by ASK7 is present on serine 235. A coiled-coil region spans residues 262–297 (LETRQQEELVKLETALNRVERRLQEKETEVSWWKDA). Phosphoserine; by ASK7 is present on residues serine 308, serine 309, serine 320, serine 321, and serine 336.

Component of a complex made of POLAR, BASL, ASK7/BIN2 and ASK3/SK12. Interacts with BASL, ASK7/BIN2 and ASK3/SK12. Post-translationally, phosphorylation by ASK7/BIN2 is increases turnover. Expressed in stomatal lineage cells with asymmetric division potential.

The protein resides in the cytoplasm. It is found in the cell cortex. Functionally, regulates asymmetric cell division (ACD), especially in stomatal-lineage cells. Acts as a stomatal lineage scaffold which regulates subcellular localization and transient polarization of kinases (e.g. ASK7/BIN2 and ASK3/SK12) involved in ACD in a BASL-dependent manner. Promotes the differentiation of both pavement cells and stomata. The sequence is that of Protein POLAR LOCALIZATION DURING ASYMMETRIC DIVISION AND REDISTRIBUTION from Arabidopsis thaliana (Mouse-ear cress).